The sequence spans 513 residues: Activin receptor type-2A (513 aa).

The first 19 residues, 1 to 19 (MGAATKLAFAVFLISCSSG), serve as a signal peptide directing secretion. The Extracellular segment spans residues 20–139 (AILGRSETQE…VTPKPPLFNT (120 aa)). Intrachain disulfides connect C30/C60, C50/C78, C85/C104, C91/C103, and C105/C110. 2 N-linked (GlcNAc...) asparagine glycosylation sites follow: N43 and N66. The helical transmembrane segment at 140-160 (LLYSLVPIMGIAVIVLFSFWM) threads the bilayer. The Cytoplasmic portion of the chain corresponds to 161–513 (YRHHKLAYPP…VDFPPKESSL (353 aa)). In terms of domain architecture, Protein kinase spans 192–485 (LQLLEIKARG…EERIIQMQKL (294 aa)). ATP contacts are provided by residues 198-206 (KARGRFGCV) and K219. Residue D322 is the Proton acceptor of the active site.

It belongs to the protein kinase superfamily. TKL Ser/Thr protein kinase family. TGFB receptor subfamily. Mg(2+) serves as cofactor. It depends on Mn(2+) as a cofactor. As to expression, expressed in hen anterior pituitary during the ovulatory cycle and in the ovarian follicle.

Its subcellular location is the cell membrane. The enzyme catalyses L-threonyl-[receptor-protein] + ATP = O-phospho-L-threonyl-[receptor-protein] + ADP + H(+). It catalyses the reaction L-seryl-[receptor-protein] + ATP = O-phospho-L-seryl-[receptor-protein] + ADP + H(+). On ligand binding, forms a receptor complex consisting of two type II and two type I transmembrane serine/threonine kinases. Type II receptors phosphorylate and activate type I receptors which autophosphorylate, then bind and activate SMAD transcriptional regulators. Receptor for activin A, activin B and inhibin A. May modulate neuropeptide expression in dorsal root ganglia (DRG) neurons and ovarian follicle development. The polypeptide is Activin receptor type-2A (ACVR2A) (Gallus gallus (Chicken)).